Consider the following 168-residue polypeptide: G/U mismatch-specific DNA glycosylase (168 aa).

This sequence belongs to the uracil-DNA glycosylase (UDG) superfamily. TDG/mug family. In terms of assembly, binds DNA as a monomer.

Its subcellular location is the cytoplasm. The catalysed reaction is Specifically hydrolyzes mismatched double-stranded DNA and polynucleotides, releasing free uracil.. Functionally, excises ethenocytosine and uracil, which can arise by alkylation or deamination of cytosine, respectively, from the corresponding mispairs with guanine in ds-DNA. It is capable of hydrolyzing the carbon-nitrogen bond between the sugar-phosphate backbone of the DNA and the mispaired base. The complementary strand guanine functions in substrate recognition. Required for DNA damage lesion repair in stationary-phase cells. The protein is G/U mismatch-specific DNA glycosylase of Escherichia coli O139:H28 (strain E24377A / ETEC).